A 418-amino-acid polypeptide reads, in one-letter code: Actin-related protein 3-B (418 aa).

It belongs to the actin family. ARP3 subfamily. As to quaternary structure, component of the Arp2/3 complex composed of actr2/arp2, actr3/arp3, arpc1 (arpc1a or arpc1b), arpc2, arpc3, arpc4 and arpc5.

The protein localises to the cytoplasm. The protein resides in the cytoskeleton. Its subcellular location is the cell projection. It localises to the nucleus. Functionally, ATP-binding component of the Arp2/3 complex, a multiprotein complex that mediates actin polymerization upon stimulation by nucleation-promoting factor (NPF). The Arp2/3 complex mediates the formation of branched actin networks in the cytoplasm, providing the force for cell motility. Seems to contact the pointed end of the daughter actin filament. In addition to its role in the cytoplasmic cytoskeleton, the Arp2/3 complex also promotes actin polymerization in the nucleus, thereby regulating gene transcription and repair of damaged DNA. The Arp2/3 complex promotes homologous recombination (HR) repair in response to DNA damage by promoting nuclear actin polymerization, leading to drive motility of double-strand breaks (DSBs). The sequence is that of Actin-related protein 3-B (actr3-b) from Xenopus laevis (African clawed frog).